The sequence spans 188 residues: MLVIAGLGNPGKTYENTRHNVGFMAIDELSKEWNIELNKTKFNGLYGMGFVSGKKVLLVKPLTYMNLSGECLRPILDYYDADHEDLKVIYDDLDLPTGKIRLRTKGSAGGHNGIKSLIQHLGTPEFDRVRIGIGRPVNGMKVVDYVLGAFTKEEAPHINDAVSKTVKACEASLTKPFLEVMNEFNANV.

Y14 serves as a coordination point for tRNA. H19 serves as the catalytic Proton acceptor. 3 residues coordinate tRNA: Y64, N66, and N112.

The protein belongs to the PTH family. As to quaternary structure, monomer.

The protein resides in the cytoplasm. The catalysed reaction is an N-acyl-L-alpha-aminoacyl-tRNA + H2O = an N-acyl-L-amino acid + a tRNA + H(+). Functionally, hydrolyzes ribosome-free peptidyl-tRNAs (with 1 or more amino acids incorporated), which drop off the ribosome during protein synthesis, or as a result of ribosome stalling. Catalyzes the release of premature peptidyl moieties from peptidyl-tRNA molecules trapped in stalled 50S ribosomal subunits, and thus maintains levels of free tRNAs and 50S ribosomes. In Bacillus velezensis (strain DSM 23117 / BGSC 10A6 / LMG 26770 / FZB42) (Bacillus amyloliquefaciens subsp. plantarum), this protein is Peptidyl-tRNA hydrolase.